The primary structure comprises 362 residues: Histidinol-phosphate aminotransferase (362 aa).

Lys-211 is modified (N6-(pyridoxal phosphate)lysine).

The protein belongs to the class-II pyridoxal-phosphate-dependent aminotransferase family. Histidinol-phosphate aminotransferase subfamily. Homodimer. It depends on pyridoxal 5'-phosphate as a cofactor.

The enzyme catalyses L-histidinol phosphate + 2-oxoglutarate = 3-(imidazol-4-yl)-2-oxopropyl phosphate + L-glutamate. It participates in amino-acid biosynthesis; L-histidine biosynthesis; L-histidine from 5-phospho-alpha-D-ribose 1-diphosphate: step 7/9. This chain is Histidinol-phosphate aminotransferase, found in Serratia proteamaculans (strain 568).